A 123-amino-acid chain; its full sequence is Large ribosomal subunit protein bL17 (123 aa).

The protein belongs to the bacterial ribosomal protein bL17 family. In terms of assembly, part of the 50S ribosomal subunit. Contacts protein L32.

The protein is Large ribosomal subunit protein bL17 of Staphylococcus haemolyticus (strain JCSC1435).